A 405-amino-acid chain; its full sequence is Replication factor C large subunit (405 aa).

47-54 (GPPGVGKT) serves as a coordination point for ATP.

The protein belongs to the activator 1 small subunits family. RfcL subfamily. In terms of assembly, heteromultimer composed of small subunits (RfcS) and large subunits (RfcL).

Part of the RFC clamp loader complex which loads the PCNA sliding clamp onto DNA. The sequence is that of Replication factor C large subunit from Saccharolobus islandicus (strain M.16.4 / Kamchatka #3) (Sulfolobus islandicus).